The primary structure comprises 437 residues: Enolase 2 (437 aa).

Lys-60 is covalently cross-linked (Glycyl lysine isopeptide (Lys-Gly) (interchain with G-Cter in ubiquitin)). Ser-138 carries the post-translational modification Phosphoserine. His-160 is an active-site residue. Position 188 is a phosphoserine (Ser-188). Lys-243 is covalently cross-linked (Glycyl lysine isopeptide (Lys-Gly) (interchain with G-Cter in ubiquitin)). 2 residues coordinate Mg(2+): Asp-247 and Glu-296. Thr-313 bears the Phosphothreonine mark. Asp-321 contacts Mg(2+). The residue at position 324 (Thr-324) is a Phosphothreonine. Lys-358 is covalently cross-linked (Glycyl lysine isopeptide (Lys-Gly) (interchain with G-Cter in ubiquitin)).

The protein belongs to the enolase family. Homodimer. Mg(2+) serves as cofactor.

The protein localises to the cytoplasm. The enzyme catalyses (2R)-2-phosphoglycerate = phosphoenolpyruvate + H2O. Its pathway is carbohydrate degradation; glycolysis; pyruvate from D-glyceraldehyde 3-phosphate: step 4/5. In Saccharomyces cerevisiae (strain ATCC 204508 / S288c) (Baker's yeast), this protein is Enolase 2 (ENO2).